We begin with the raw amino-acid sequence, 977 residues long: uncharacterized protein (977 aa).

A signal peptide spans 1–24 (MQSNLLKVLGVLAIVATLVCFIFA). A disordered region spans residues 125 to 146 (TESTRPGKSNLDDKGNMIPIPR). The next 6 membrane-spanning stretches (helical) occupy residues 612 to 632 (IKAI…LGFA), 722 to 742 (LGLS…IVII), 754 to 774 (AFMA…FLLF), 796 to 816 (VVMM…LDFV), 833 to 853 (FIGT…INWF), and 866 to 886 (GVNM…YGYV). Positions 918–977 (KALSPIGMDDKTRQGITGRAEARLKQRNKTLDQAEKNRKNTPKEGGEKTNAEPPQPEARG) are disordered. The span at 937–967 (AEARLKQRNKTLDQAEKNRKNTPKEGGEKTN) shows a compositional bias: basic and acidic residues.

It belongs to the TrbL/VirB6 family.

It localises to the cell membrane. This is an uncharacterized protein from Rickettsia felis (strain ATCC VR-1525 / URRWXCal2) (Rickettsia azadi).